The primary structure comprises 560 residues: Synaptotagmin-5 (560 aa).

A helical transmembrane segment spans residues 2–22; it reads GFIVGVVIGLLVGIAIIIGFV. Residues 67–249 form the SMP-LTD domain; that stretch reads ERQKLTWLNH…WPVRKVIPII (183 aa). The phospholipid binding stretch occupies residues 227–523; sequence EETIRDAVED…YIGRCILTLT (297 aa). 2 C2 domains span residues 243–364 and 417–535; these read RKVI…DVWL and TTDE…KDWY. Asp278, Asp284, Asp334, Glu336, Asp451, Asp457, Asp506, Asp508, and Asp513 together coordinate Ca(2+).

It belongs to the synaptotagmin family. Ca(2+) serves as cofactor.

Its subcellular location is the membrane. In terms of biological role, may be involved in membrane trafficking. This is Synaptotagmin-5 (SYT5) from Arabidopsis thaliana (Mouse-ear cress).